The following is a 705-amino-acid chain: MSSFQGQMAEYPTISIDRFDRENLKARAYFLSHCHKDHMKGLRAPSLKRRLECSLKVFLYCSPVTKELLLTSPKYRFWENRIITIEIETPTQISLVDEASGEKEEVVVTLLPAGHCPGSVMFLFQGSNGTVLYTGDFRLAKGEASRMELLHSGGRVKDIQSVYLDTTFCDPRFYQIPSREQCLRGILELVRSWVTRSPHHVVWLNCKAAYGYEYLFTNLSEELGVQVHVDKLDMFKNMPDILHHLTTDRNTQIHACRHPKAEECFQWNKLPCGITSQNKTALHTISIKPSTMWFGERTRKTNVIVRTGESSYRACFSFHSSFSEIKDFLSYICPVNVYPNVIPVGLTVDKVMDVLKPLCRSPQSVEPKYKPLGKLKRARTIHLDSEEDDDLFDDPLPTPLRHKVPYQLTLQPELFSMKALPLDQPELRQSPGGCKAESVWSPSLANFIDCEESNSDSGEELETPPPSLQGGLGPSTLVQQNADPDVDIPQWEVFFKRRDEITGECLEHLPSSIETGGSQSPKLCSDSPKLCSDSPKLCSDSDGDSTHISSQNSSQSTHITDQGSQGWDSQCDTVLLSSQEKSGGDSTSLNKGAYKPKLKESISASQIEQDALCPQDTHCDLKSRAEVNGAPCLVELDTLSGRKSPPEKTLLSSTRADSQSSSDFEIPSTPEAELPTPEHLQCLYRKLATGQSIVVEKRKCSLLDS.

Thr380 bears the Phosphothreonine mark. Phosphoserine is present on Ser385. Over residues 451–462 (EESNSDSGEELE) the composition is skewed to acidic residues. 3 disordered regions span residues 451 to 484 (EESNSDSGEELETPPPSLQGGLGPSTLVQQNADP), 535 to 569 (PKLCSDSDGDSTHISSQNSSQSTHITDQGSQGWDS), and 638 to 675 (TLSGRKSPPEKTLLSSTRADSQSSSDFEIPSTPEAELP). Residues 546 to 559 (THISSQNSSQSTHI) show a composition bias toward low complexity. Residues 560–569 (TDQGSQGWDS) show a composition bias toward polar residues. Residues 652–662 (SSTRADSQSSS) are compositionally biased toward low complexity. At Ser658 the chain carries Phosphoserine; by ATM.

This sequence belongs to the DNA repair metallo-beta-lactamase (DRMBL) family. In terms of assembly, interacts with LIG4; the interaction is direct. Interacts with ATM. Interacts with BRCA1. Interacts with PRKDC. Interacts with TP53BP1. Also exhibits ATM- and phosphorylation-dependent interaction with the MRN complex, composed of MRE11, RAD50, and NBN. Post-translationally, phosphorylation on undefined residues by PRKDC may stimulate endonucleolytic activity on 5' and 3' hairpins and overhangs. PRKDC must remain present, even after phosphorylation, for efficient hairpin opening. Also phosphorylated by ATM in response to ionizing radiation (IR) and by ATR in response to ultraviolet (UV) radiation.

Its subcellular location is the nucleus. Functionally, required for V(D)J recombination, the process by which exons encoding the antigen-binding domains of immunoglobulins and T-cell receptor proteins are assembled from individual V, (D), and J gene segments. V(D)J recombination is initiated by the lymphoid specific RAG endonuclease complex, which generates site specific DNA double strand breaks (DSBs). These DSBs present two types of DNA end structures: hairpin sealed coding ends and phosphorylated blunt signal ends. These ends are independently repaired by the non homologous end joining (NHEJ) pathway to form coding and signal joints respectively. This protein likely exhibits single-strand specific 5'-3' exonuclease activity in isolation, and may acquire endonucleolytic activity on 5' and 3' hairpins and overhangs when in a complex with PRKDC. The latter activity may be required specifically for the resolution of closed hairpins prior to the formation of the coding joint. May also be required for the repair of complex DSBs induced by ionizing radiation, which require substantial end-processing prior to religation by NHEJ. The chain is Protein artemis (Dclre1c) from Mus musculus (Mouse).